Here is a 264-residue protein sequence, read N- to C-terminus: uncharacterized protein (264 aa).

The N-terminal stretch at 1-22 (MKSIKRIGLCISLLILIIFVTS) is a signal peptide. Residue Cys-23 is the site of N-palmitoyl cysteine attachment. The S-diacylglycerol cysteine moiety is linked to residue Cys-23.

The protein belongs to the staphylococcal tandem lipoprotein family.

It localises to the cell membrane. This is an uncharacterized protein from Staphylococcus aureus (strain MRSA252).